Reading from the N-terminus, the 317-residue chain is tRNA dimethylallyltransferase (317 aa).

Position 14–21 (14–21 (GPTAVGKT)) interacts with ATP. 16 to 21 (TAVGKT) provides a ligand contact to substrate. Positions 39-42 (DSMQ) are interaction with substrate tRNA.

Belongs to the IPP transferase family. As to quaternary structure, monomer. The cofactor is Mg(2+).

The enzyme catalyses adenosine(37) in tRNA + dimethylallyl diphosphate = N(6)-dimethylallyladenosine(37) in tRNA + diphosphate. Catalyzes the transfer of a dimethylallyl group onto the adenine at position 37 in tRNAs that read codons beginning with uridine, leading to the formation of N6-(dimethylallyl)adenosine (i(6)A). The chain is tRNA dimethylallyltransferase from Bacillus cereus (strain AH187).